Here is a 232-residue protein sequence, read N- to C-terminus: Urease accessory protein UreF (232 aa).

Belongs to the UreF family. In terms of assembly, ureD, UreF and UreG form a complex that acts as a GTP-hydrolysis-dependent molecular chaperone, activating the urease apoprotein by helping to assemble the nickel containing metallocenter of UreC. The UreE protein probably delivers the nickel.

It localises to the cytoplasm. Required for maturation of urease via the functional incorporation of the urease nickel metallocenter. The polypeptide is Urease accessory protein UreF (Trichodesmium erythraeum (strain IMS101)).